We begin with the raw amino-acid sequence, 159 residues long: uncharacterized protein (159 aa).

The N-acetyltransferase domain occupies 4–153 (IKTDDLTHPA…HSRFLSLTLC (150 aa)).

This sequence belongs to the acetyltransferase family.

This is an uncharacterized protein from Escherichia coli (strain K12).